A 322-amino-acid polypeptide reads, in one-letter code: GTP 3',8-cyclase (322 aa).

The Radical SAM core domain occupies 5–217 (SYGRVVDYLR…DIISKKYNIK (213 aa)). R14 serves as a coordination point for GTP. [4Fe-4S] cluster contacts are provided by C21 and C25. Residue Y27 participates in S-adenosyl-L-methionine binding. Residue C28 coordinates [4Fe-4S] cluster. GTP is bound at residue R64. G68 provides a ligand contact to S-adenosyl-L-methionine. T95 provides a ligand contact to GTP. S119 serves as a coordination point for S-adenosyl-L-methionine. Residue K155 coordinates GTP. M189 lines the S-adenosyl-L-methionine pocket. Positions 249 and 252 each coordinate [4Fe-4S] cluster. 254–256 (RLR) contacts GTP. A [4Fe-4S] cluster-binding site is contributed by C266.

It belongs to the radical SAM superfamily. MoaA family. As to quaternary structure, monomer and homodimer. Requires [4Fe-4S] cluster as cofactor.

It carries out the reaction GTP + AH2 + S-adenosyl-L-methionine = (8S)-3',8-cyclo-7,8-dihydroguanosine 5'-triphosphate + 5'-deoxyadenosine + L-methionine + A + H(+). It participates in cofactor biosynthesis; molybdopterin biosynthesis. Functionally, catalyzes the cyclization of GTP to (8S)-3',8-cyclo-7,8-dihydroguanosine 5'-triphosphate. The chain is GTP 3',8-cyclase from Campylobacter fetus subsp. fetus (strain 82-40).